We begin with the raw amino-acid sequence, 366 residues long: Sec-independent protein translocase protein TatC (366 aa).

7 helical membrane passes run 42 to 62 (VLAV…LFTM), 70 to 90 (HMPA…FIPL), 97 to 117 (AVFI…APGL), 134 to 154 (ILFY…VFGF), 179 to 199 (LFFA…LVIV), 207 to 227 (LAGF…ILTP), and 230 to 250 (VLSQ…GLFV). A compositionally biased stretch (acidic residues) spans 266-279 (EAEESGAADDESDE). The interval 266-366 (EAEESGAADD…PSPKKPDSPV (101 aa)) is disordered. 2 stretches are compositionally biased toward basic and acidic residues: residues 281 to 290 (VSARHAEYEA) and 301 to 318 (DMDK…RLES). A compositionally biased stretch (polar residues) spans 319–333 (DSSASDDGPESNTAG).

This sequence belongs to the TatC family. In terms of assembly, the Tat system comprises two distinct complexes: a TatABC complex, containing multiple copies of TatA, TatB and TatC subunits, and a separate TatA complex, containing only TatA subunits. Substrates initially bind to the TatABC complex, which probably triggers association of the separate TatA complex to form the active translocon.

The protein localises to the cell inner membrane. Part of the twin-arginine translocation (Tat) system that transports large folded proteins containing a characteristic twin-arginine motif in their signal peptide across membranes. Together with TatB, TatC is part of a receptor directly interacting with Tat signal peptides. This is Sec-independent protein translocase protein TatC from Halothiobacillus neapolitanus (strain ATCC 23641 / c2) (Thiobacillus neapolitanus).